Consider the following 343-residue polypeptide: MMLFSVRFISGFVFGAGSGVAALKLYYYEEQQTHTGSSVHRVIGRFGLPESGAESRFYTNHVLSYDQTHRTPRWVAEHLSSTRLLGEANRKQCKFRPDPSVPELFTAHNEDYLKSGWSRGHMAPAGDNKSSEQAMAETFYLSNIVPQNYENNAGFWNRLEMYCRELTEKFSDVWVVSGPLMKPQITDDGKKTVSYQLIGKDEVAVPTHLYKVILAQKDPSSDALAVGAFVVPNAPIGFQHQLQEFQVSVCDLERESGLVFFPALQKQQLSDLCTVDSCQLMDFRRFSLYISSRKMQSANSVYRLEKILAELQEAGIAPDEHLKQIYQQRRTELERRQDTNTHT.

The Proton acceptor role is filled by histidine 121. An a divalent metal cation-binding site is contributed by asparagine 152.

Belongs to the DNA/RNA non-specific endonuclease family. As to quaternary structure, homodimer. Requires a divalent metal cation as cofactor.

The protein resides in the mitochondrion inner membrane. Its function is as follows. Endo/exonuclease with nicking activity towards supercoiled DNA, a preference for single-stranded DNA and 5'-3' exonuclease activity. This is Nuclease EXOG, mitochondrial (exog) from Danio rerio (Zebrafish).